The sequence spans 125 residues: Large ribosomal subunit protein bL12 (125 aa).

Belongs to the bacterial ribosomal protein bL12 family. Homodimer. Part of the ribosomal stalk of the 50S ribosomal subunit. Forms a multimeric L10(L12)X complex, where L10 forms an elongated spine to which 2 to 4 L12 dimers bind in a sequential fashion. Binds GTP-bound translation factors.

Functionally, forms part of the ribosomal stalk which helps the ribosome interact with GTP-bound translation factors. Is thus essential for accurate translation. The protein is Large ribosomal subunit protein bL12 of Ruegeria sp. (strain TM1040) (Silicibacter sp.).